The following is a 399-amino-acid chain: Dual-specificity RNA methyltransferase RlmN (399 aa).

Glu122 serves as the catalytic Proton acceptor. Positions 128 to 371 constitute a Radical SAM core domain; that stretch reads ETDRGTLCVS…VRTPRGRDIL (244 aa). An intrachain disulfide couples Cys135 to Cys374. [4Fe-4S] cluster is bound by residues Cys142, Cys146, and Cys149. S-adenosyl-L-methionine is bound by residues 200–201, Ser232, 254–256, and Asn331; these read GE and SLH. Cys374 serves as the catalytic S-methylcysteine intermediate.

This sequence belongs to the radical SAM superfamily. RlmN family. The cofactor is [4Fe-4S] cluster.

The protein localises to the cytoplasm. The catalysed reaction is adenosine(2503) in 23S rRNA + 2 reduced [2Fe-2S]-[ferredoxin] + 2 S-adenosyl-L-methionine = 2-methyladenosine(2503) in 23S rRNA + 5'-deoxyadenosine + L-methionine + 2 oxidized [2Fe-2S]-[ferredoxin] + S-adenosyl-L-homocysteine. It carries out the reaction adenosine(37) in tRNA + 2 reduced [2Fe-2S]-[ferredoxin] + 2 S-adenosyl-L-methionine = 2-methyladenosine(37) in tRNA + 5'-deoxyadenosine + L-methionine + 2 oxidized [2Fe-2S]-[ferredoxin] + S-adenosyl-L-homocysteine. Specifically methylates position 2 of adenine 2503 in 23S rRNA and position 2 of adenine 37 in tRNAs. m2A2503 modification seems to play a crucial role in the proofreading step occurring at the peptidyl transferase center and thus would serve to optimize ribosomal fidelity. The chain is Dual-specificity RNA methyltransferase RlmN from Rhodopseudomonas palustris (strain TIE-1).